Reading from the N-terminus, the 290-residue chain is Protoheme IX farnesyltransferase 1 (290 aa).

8 consecutive transmembrane segments (helical) span residues 8–28 (ITKP…FFLA), 36–56 (FLLL…GCVV), 85–105 (AAFV…FQVV), 108–128 (LSAV…TMWY), 131–151 (NSVY…LVGY), 152–172 (LAVT…FCLW), 211–231 (AYVV…EAGY), and 269–289 (LLVV…LPFI).

It belongs to the UbiA prenyltransferase family. Protoheme IX farnesyltransferase subfamily.

It is found in the cell inner membrane. The catalysed reaction is heme b + (2E,6E)-farnesyl diphosphate + H2O = Fe(II)-heme o + diphosphate. The protein operates within porphyrin-containing compound metabolism; heme O biosynthesis; heme O from protoheme: step 1/1. Its function is as follows. Converts heme B (protoheme IX) to heme O by substitution of the vinyl group on carbon 2 of heme B porphyrin ring with a hydroxyethyl farnesyl side group. The sequence is that of Protoheme IX farnesyltransferase 1 from Vibrio campbellii (strain ATCC BAA-1116).